The primary structure comprises 366 residues: Stage V sporulation protein E (366 aa).

Helical transmembrane passes span 10–30 (LLLVIITLLLLTIGLIMVYSA), 50–70 (LLFAGIGVIAMFFIMNVDYWT), 77–97 (LLMVICFFLLVLVLIPGVGMV), 105–125 (IGVGAFSIQPSEFMKLAMIAF), 144–164 (FVPALGIVFSAFLIIMCQPDL), 185–205 (IAHFVFLGLIGLSGFVGLVLS), 227–247 (GFQIIQSLYAVGPGGLFGMGL), 264–284 (FIFAILSEELGFIGGTLILLL), 306–326 (FVAVGIISMIAIQVMINIGVV), and 337–357 (LPFLSYGGSSLTLMLMAVGVL).

It belongs to the SEDS family. SpoVE subfamily.

Its subcellular location is the cell membrane. Functionally, may play an essential role not only during sporulation, but also during vegetative growth. This is Stage V sporulation protein E (spoVE) from Bacillus subtilis (strain 168).